The chain runs to 747 residues: uncharacterized protein (747 aa).

A helical membrane pass occupies residues 7 to 27 (FFLKVISVIAPIVIIPTILAN).

It localises to the membrane. This is an uncharacterized protein from Ureaplasma parvum serovar 3 (strain ATCC 700970).